The following is a 144-amino-acid chain: Large ribosomal subunit protein uL15 (144 aa).

Residues 1-44 are disordered; that stretch reads MKLNELMPSEGSRTNRKRIGRGTSSGTGKTAGRGQKGQKARGKV. The span at 23–35 shows a compositional bias: gly residues; the sequence is TSSGTGKTAGRGQ.

The protein belongs to the universal ribosomal protein uL15 family. As to quaternary structure, part of the 50S ribosomal subunit.

In terms of biological role, binds to the 23S rRNA. This Pediococcus pentosaceus (strain ATCC 25745 / CCUG 21536 / LMG 10740 / 183-1w) protein is Large ribosomal subunit protein uL15.